We begin with the raw amino-acid sequence, 886 residues long: 3',5'-cyclic-AMP phosphodiesterase 4A (886 aa).

Residues 1–128 (MEPPTVPSER…GRSPLDSQAS (128 aa)) are disordered. Ser-13 is modified (phosphoserine). Residues 36-46 (QPRTPIRIQQR) are compositionally biased toward low complexity. Basic and acidic residues predominate over residues 51–78 (SAERAERERQPHRPIERADAMDTSDRPG). A compositionally biased stretch (gly residues) spans 93 to 104 (TGTGSGGAGGGS). Gly-119 and Leu-123 each carry phosphoserine. The residue at position 152 (Ser-152) is a Phosphoserine; by MAPKAPK2. Phosphoserine occurs at positions 157, 165, and 209. The interval 294-331 (KQNEVEIPSPTMKEREKQQAPRPRPSQPPPPPVPHLQP) is disordered. Residues 315–328 (RPRPSQPPPPPVPH) are compositionally biased toward pro residues. The residue at position 346 (Ser-346) is a Phosphoserine. One can recognise a PDEase domain in the interval 357 to 686 (VKTDQEELLA…DWYYSAIRQS (330 aa)). Residue Lys-358 forms a Glycyl lysine isopeptide (Lys-Gly) (interchain with G-Cter in SUMO) linkage. His-433 serves as the catalytic Proton donor. His-433 contacts 3',5'-cyclic AMP. The AMP site is built by His-433 and His-437. His-437, His-473, Asp-474, and Asp-591 together coordinate Zn(2+). Residues Asp-474, Asp-591, Gln-642, and Phe-645 each coordinate AMP. Asp-474 is a Mg(2+) binding site. Position 474 (Asp-474) interacts with Mn(2+). The 3',5'-cyclic AMP site is built by Gln-642 and Phe-645. Disordered regions lie at residues 682-705 (AIRQ…PLPD) and 866-886 (FGED…GDPT). Ser-686 and Ser-688 each carry phosphoserine. Residues 876–886 (PGGGGSGGDPT) show a composition bias toward gly residues.

The protein belongs to the cyclic nucleotide phosphodiesterase family. PDE4 subfamily. In terms of assembly, interacts with LYN (via SH3 domain). Interacts with ARRB2. Zn(2+) is required as a cofactor. It depends on Mg(2+) as a cofactor. Requires Mn(2+) as cofactor. Post-translationally, proteolytically cleaved by CASP3. In terms of processing, phosphorylated at Ser-119 by PKA. As to expression, expressed in lymphoid cell subsets including CD8-positive T cells and T-helper 2 cells. Expressed in dendritic cells. Highly expressed in liver, stomach, testis, thyroid and adrenal glands and at a lower extent in placenta, kidney, pancreas, ovary, uterus and skin. Expressed in myeloid cell subsets including dendritic cells, monocytes, macrophages, eosinophils and mast cells. Expressed in natural killer cells. Expressed in bronchial smooth muscle. In terms of tissue distribution, expressed at high levels in the heart and small intestine. It is also found in the brain, kidney, spleen, colon, salivary gland, ovary and peripheral blood lymphocytes. As to expression, expressed predominantly in skeletal muscle and brain and at lower levels in the testis. Found in specific neuronal subpopulations including cortical pyramidal neurons, horn neurons in the spinal cord and Purkinje cells in cerebellum (at protein level).

Its subcellular location is the cytoplasm. It localises to the perinuclear region. The protein resides in the cell projection. The protein localises to the ruffle membrane. It is found in the cytosol. Its subcellular location is the membrane. It carries out the reaction 3',5'-cyclic AMP + H2O = AMP + H(+). It participates in purine metabolism; 3',5'-cyclic AMP degradation; AMP from 3',5'-cyclic AMP: step 1/1. With respect to regulation, inhibited by rolipram, cilomilast, Ro 20-1724, roflumilast and denbufylline. Inhibited by rolipram. Its activity is regulated as follows. Inhibited by rolipram and cilomilast. In terms of biological role, hydrolyzes the second messenger 3',5'-cyclic AMP (cAMP), which is a key regulator of many important physiological processes. Efficiently hydrolyzes cAMP. Functionally, efficiently hydrolyzes cAMP. The phosphodiesterase activity is not affected by calcium, calmodulin or cyclic GMP (cGMP) levels. Does not hydrolyze cGMP. In Homo sapiens (Human), this protein is 3',5'-cyclic-AMP phosphodiesterase 4A (PDE4A).